Reading from the N-terminus, the 176-residue chain is 2-C-methyl-D-erythritol 2,4-cyclodiphosphate synthase (176 aa).

Residues D23, H25, and H60 each contribute to the a divalent metal cation site. 23 to 25 lines the 4-CDP-2-C-methyl-D-erythritol 2-phosphate pocket; it reads DSH. 149–152 lines the 4-CDP-2-C-methyl-D-erythritol 2-phosphate pocket; the sequence is TSGE.

Belongs to the IspF family. In terms of assembly, homotrimer. It depends on a divalent metal cation as a cofactor.

It catalyses the reaction 4-CDP-2-C-methyl-D-erythritol 2-phosphate = 2-C-methyl-D-erythritol 2,4-cyclic diphosphate + CMP. The protein operates within isoprenoid biosynthesis; isopentenyl diphosphate biosynthesis via DXP pathway; isopentenyl diphosphate from 1-deoxy-D-xylulose 5-phosphate: step 4/6. Involved in the biosynthesis of isopentenyl diphosphate (IPP) and dimethylallyl diphosphate (DMAPP), two major building blocks of isoprenoid compounds. Catalyzes the conversion of 4-diphosphocytidyl-2-C-methyl-D-erythritol 2-phosphate (CDP-ME2P) to 2-C-methyl-D-erythritol 2,4-cyclodiphosphate (ME-CPP) with a corresponding release of cytidine 5-monophosphate (CMP). This is 2-C-methyl-D-erythritol 2,4-cyclodiphosphate synthase from Chlamydia caviae (strain ATCC VR-813 / DSM 19441 / 03DC25 / GPIC) (Chlamydophila caviae).